The chain runs to 40 residues: Photosystem II reaction center protein J (40 aa).

The chain crosses the membrane as a helical span at residues 8–28 (IPLWVIGTVAGILVIGIIGIF).

The protein belongs to the PsbJ family. In terms of assembly, PSII is composed of 1 copy each of membrane proteins PsbA, PsbB, PsbC, PsbD, PsbE, PsbF, PsbH, PsbI, PsbJ, PsbK, PsbL, PsbM, PsbT, PsbX, PsbY, PsbZ, Psb30/Ycf12, at least 3 peripheral proteins of the oxygen-evolving complex and a large number of cofactors. It forms dimeric complexes.

It is found in the plastid. It localises to the chloroplast thylakoid membrane. Its function is as follows. One of the components of the core complex of photosystem II (PSII). PSII is a light-driven water:plastoquinone oxidoreductase that uses light energy to abstract electrons from H(2)O, generating O(2) and a proton gradient subsequently used for ATP formation. It consists of a core antenna complex that captures photons, and an electron transfer chain that converts photonic excitation into a charge separation. The polypeptide is Photosystem II reaction center protein J (Lobularia maritima (Sweet alyssum)).